A 158-amino-acid chain; its full sequence is Large ribosomal subunit protein uL11 (158 aa).

The tract at residues 1 to 21 (MAQSVKTMVEGGKATTGPPIG) is disordered.

Belongs to the universal ribosomal protein uL11 family. As to quaternary structure, part of the ribosomal stalk of the 50S ribosomal subunit. Interacts with L10 and the large rRNA to form the base of the stalk. L10 forms an elongated spine to which L12 dimers bind in a sequential fashion forming a multimeric L10(L12)X complex.

Its function is as follows. Forms part of the ribosomal stalk which helps the ribosome interact with GTP-bound translation factors. The sequence is that of Large ribosomal subunit protein uL11 from Thermoplasma volcanium (strain ATCC 51530 / DSM 4299 / JCM 9571 / NBRC 15438 / GSS1).